Here is a 634-residue protein sequence, read N- to C-terminus: Chaperone protein DnaK (634 aa).

The residue at position 198 (Thr198) is a Phosphothreonine; by autocatalysis. Residues 599-634 (KQTQEGAEAASEAGEQSAGDEGVVDAEFEEVDEQNK) form a disordered region. Positions 602 to 619 (QEGAEAASEAGEQSAGDE) are enriched in low complexity. A compositionally biased stretch (acidic residues) spans 620–634 (GVVDAEFEEVDEQNK).

This sequence belongs to the heat shock protein 70 family.

Functionally, acts as a chaperone. This chain is Chaperone protein DnaK, found in Syntrophotalea carbinolica (strain DSM 2380 / NBRC 103641 / GraBd1) (Pelobacter carbinolicus).